A 368-amino-acid polypeptide reads, in one-letter code: Histidinol-phosphate aminotransferase (368 aa).

An N6-(pyridoxal phosphate)lysine modification is found at K226.

This sequence belongs to the class-II pyridoxal-phosphate-dependent aminotransferase family. Histidinol-phosphate aminotransferase subfamily. In terms of assembly, homodimer. Pyridoxal 5'-phosphate is required as a cofactor.

It carries out the reaction L-histidinol phosphate + 2-oxoglutarate = 3-(imidazol-4-yl)-2-oxopropyl phosphate + L-glutamate. It participates in amino-acid biosynthesis; L-histidine biosynthesis; L-histidine from 5-phospho-alpha-D-ribose 1-diphosphate: step 7/9. The protein is Histidinol-phosphate aminotransferase of Colwellia psychrerythraea (strain 34H / ATCC BAA-681) (Vibrio psychroerythus).